Consider the following 286-residue polypeptide: Protease HtpX (286 aa).

Transmembrane regions (helical) follow at residues 4–24 and 33–53; these read ILLF…ILSL and TGLL…SLFL. His-139 lines the Zn(2+) pocket. Glu-140 is an active-site residue. Residue His-143 coordinates Zn(2+). Helical transmembrane passes span 147 to 167 and 186 to 206; these read GDMV…IFVS and IYFL…SMIA. Position 214 (Glu-214) interacts with Zn(2+).

It belongs to the peptidase M48B family. It depends on Zn(2+) as a cofactor.

It localises to the cell inner membrane. In Pasteurella multocida (strain Pm70), this protein is Protease HtpX.